Reading from the N-terminus, the 430-residue chain is Serine hydroxymethyltransferase 1 (430 aa).

(6S)-5,6,7,8-tetrahydrofolate contacts are provided by residues Leu132 and 136–138 (GHL). Position 241 is an N6-(pyridoxal phosphate)lysine (Lys241).

It belongs to the SHMT family. As to quaternary structure, homodimer. It depends on pyridoxal 5'-phosphate as a cofactor.

It localises to the cytoplasm. The enzyme catalyses (6R)-5,10-methylene-5,6,7,8-tetrahydrofolate + glycine + H2O = (6S)-5,6,7,8-tetrahydrofolate + L-serine. Its pathway is one-carbon metabolism; tetrahydrofolate interconversion. It participates in amino-acid biosynthesis; glycine biosynthesis; glycine from L-serine: step 1/1. Catalyzes the reversible interconversion of serine and glycine with tetrahydrofolate (THF) serving as the one-carbon carrier. This reaction serves as the major source of one-carbon groups required for the biosynthesis of purines, thymidylate, methionine, and other important biomolecules. Also exhibits THF-independent aldolase activity toward beta-hydroxyamino acids, producing glycine and aldehydes, via a retro-aldol mechanism. The chain is Serine hydroxymethyltransferase 1 from Bordetella parapertussis (strain 12822 / ATCC BAA-587 / NCTC 13253).